The sequence spans 342 residues: Ribosomal RNA small subunit methyltransferase C (342 aa).

The protein belongs to the methyltransferase superfamily. RsmC family. As to quaternary structure, monomer.

The protein localises to the cytoplasm. The catalysed reaction is guanosine(1207) in 16S rRNA + S-adenosyl-L-methionine = N(2)-methylguanosine(1207) in 16S rRNA + S-adenosyl-L-homocysteine + H(+). In terms of biological role, specifically methylates the guanine in position 1207 of 16S rRNA in the 30S particle. The chain is Ribosomal RNA small subunit methyltransferase C from Salmonella typhi.